We begin with the raw amino-acid sequence, 356 residues long: tRNA N6-adenosine threonylcarbamoyltransferase (356 aa).

Positions 115 and 119 each coordinate Fe cation. Residues 138–142 (LVSGG), aspartate 171, glycine 184, and asparagine 283 contribute to the substrate site. Aspartate 311 is a Fe cation binding site.

It belongs to the KAE1 / TsaD family. It depends on Fe(2+) as a cofactor.

It is found in the cytoplasm. It catalyses the reaction L-threonylcarbamoyladenylate + adenosine(37) in tRNA = N(6)-L-threonylcarbamoyladenosine(37) in tRNA + AMP + H(+). Required for the formation of a threonylcarbamoyl group on adenosine at position 37 (t(6)A37) in tRNAs that read codons beginning with adenine. Is involved in the transfer of the threonylcarbamoyl moiety of threonylcarbamoyl-AMP (TC-AMP) to the N6 group of A37, together with TsaE and TsaB. TsaD likely plays a direct catalytic role in this reaction. In Prochlorococcus marinus (strain MIT 9215), this protein is tRNA N6-adenosine threonylcarbamoyltransferase.